We begin with the raw amino-acid sequence, 369 residues long: Phenylalanine--tRNA ligase alpha subunit (369 aa).

Glu269 lines the Mg(2+) pocket.

It belongs to the class-II aminoacyl-tRNA synthetase family. Phe-tRNA synthetase alpha subunit type 1 subfamily. In terms of assembly, tetramer of two alpha and two beta subunits. The cofactor is Mg(2+).

Its subcellular location is the cytoplasm. It carries out the reaction tRNA(Phe) + L-phenylalanine + ATP = L-phenylalanyl-tRNA(Phe) + AMP + diphosphate + H(+). In Brucella canis (strain ATCC 23365 / NCTC 10854 / RM-666), this protein is Phenylalanine--tRNA ligase alpha subunit.